The following is a 678-amino-acid chain: NADPH--cytochrome P450 reductase (678 aa).

Position 2 is an N-acetylglycine (Gly2). Over 2–21 the chain is Lumenal; sequence GDSHVDTGATSTEAVAEEVS. A helical membrane pass occupies residues 22-42; the sequence is LFSMTDMILLSVLVGFLTYFF. The Cytoplasmic portion of the chain corresponds to 43–678; it reads LFRKKKEEIP…KGRYSLDVWS (636 aa). Phosphoserine is present on Ser63. The region spanning 80 to 224 is the Flavodoxin-like domain; sequence IIVFYGSQTG…DFITWREQFW (145 aa). Residues 86–91, 138–141, 173–182, and Asp208 each bind FMN; these read SQTGTA, ATYG, and LGNKTYEHFN. Residues 279 to 521 form the FAD-binding FR-type domain; the sequence is KNPFLAAVTT…FVRKSQFRLP (243 aa). Residue Arg298 participates in NADP(+) binding. FAD contacts are provided by residues Arg424, 454–457, 472–474, Tyr478, and 488–491; these read RYYS, CAV, and GVAT. Residues Thr535, 596-597, 602-606, and Asp639 each bind NADP(+); these read SR and KVYVQ. An FAD-binding site is contributed by Trp677.

This sequence belongs to the NADPH--cytochrome P450 reductase family. The protein in the N-terminal section; belongs to the flavodoxin family. In the C-terminal section; belongs to the flavoprotein pyridine nucleotide cytochrome reductase family. It depends on FAD as a cofactor. FMN serves as cofactor.

It is found in the endoplasmic reticulum membrane. The enzyme catalyses 2 oxidized [cytochrome P450] + NADPH = 2 reduced [cytochrome P450] + NADP(+) + H(+). This enzyme is required for electron transfer from NADP to cytochrome P450 in microsomes. It can also provide electron transfer to heme oxygenase and cytochrome B5. This chain is NADPH--cytochrome P450 reductase, found in Cavia porcellus (Guinea pig).